We begin with the raw amino-acid sequence, 157 residues long: Ribosome maturation factor RimP (157 aa).

Belongs to the RimP family.

The protein localises to the cytoplasm. Its function is as follows. Required for maturation of 30S ribosomal subunits. The protein is Ribosome maturation factor RimP of Levilactobacillus brevis (strain ATCC 367 / BCRC 12310 / CIP 105137 / JCM 1170 / LMG 11437 / NCIMB 947 / NCTC 947) (Lactobacillus brevis).